A 152-amino-acid chain; its full sequence is MSFTQIARSCSRLAATLAPRRVASGILIQSQASRMMHRIAVPSMTSQLSQECRGRWQTQLVRKYSAKPPLSLKLINERVLLVLKLYDKIDPSKLNVESHFINDLGLDSLDHVEVIMAMEDEFGFEIPDSDAEKLLKPADIIKYVADKEDVYE.

Residues 73 to 148 enclose the Carrier domain; that stretch reads KLINERVLLV…DIIKYVADKE (76 aa). Residue serine 108 is modified to O-(pantetheine 4'-phosphoryl)serine.

It belongs to the acyl carrier protein (ACP) family. As to quaternary structure, complex I is composed of about 45 different subunits.

It localises to the mitochondrion. Carrier of the growing fatty acid chain in fatty acid biosynthesis. Accessory and non-catalytic subunit of the mitochondrial membrane respiratory chain NADH dehydrogenase (Complex I), which functions in the transfer of electrons from NADH to the respiratory chain. The sequence is that of Acyl carrier protein, mitochondrial from Drosophila melanogaster (Fruit fly).